Consider the following 101-residue polypeptide: MEPVDPRLEPWKHPGSQPKTACTNCYCKKCCFHCQVCFTKKALGISYGRKKRRQRRRAHQDSQNHQASLSKQPSSQTRGDPTGPKEPKKEVEREAETDPLD.

Residues 1-24 (MEPVDPRLEPWKHPGSQPKTACTN) form an interaction with human CREBBP region. The transactivation stretch occupies residues 1-48 (MEPVDPRLEPWKHPGSQPKTACTNCYCKKCCFHCQVCFTKKALGISYG). Zn(2+)-binding residues include C22, C25, and C27. Residues 22–37 (CTNCYCKKCCFHCQVC) are cysteine-rich. K28 is modified (N6-acetyllysine; by host PCAF). Zn(2+)-binding residues include C30, H33, C34, and C37. A core region spans residues 38-48 (FTKKALGISYG). Residues 47-101 (YGRKKRRQRRRAHQDSQNHQASLSKQPSSQTRGDPTGPKEPKKEVEREAETDPLD) are disordered. A compositionally biased stretch (basic residues) spans 48–58 (GRKKRRQRRRA). The short motif at 49-57 (RKKRRQRRR) is the Nuclear localization signal, RNA-binding (TAR), and protein transduction element. The tract at residues 49-86 (RKKRRQRRRAHQDSQNHQASLSKQPSSQTRGDPTGPKE) is interaction with the host capping enzyme RNGTT. N6-acetyllysine; by host EP300 and GCN5L2 is present on residues K50 and K51. Asymmetric dimethylarginine; by host PRMT6 occurs at positions 52 and 53. Positions 61–79 (DSQNHQASLSKQPSSQTRG) are enriched in polar residues. A Glycyl lysine isopeptide (Lys-Gly) (interchain with G-Cter in ubiquitin) cross-link involves residue K71. A Cell attachment site motif is present at residues 78-80 (RGD). Residues 83-101 (GPKEPKKEVEREAETDPLD) show a composition bias toward basic and acidic residues.

It belongs to the lentiviruses Tat family. As to quaternary structure, interacts with host CCNT1. Associates with the P-TEFb complex composed at least of Tat, P-TEFb (CDK9 and CCNT1), TAR RNA, RNA Pol II. Recruits the HATs CREBBP, TAF1/TFIID, EP300, PCAF and GCN5L2. Interacts with host KAT5/Tip60; this interaction targets the latter to degradation. Interacts with the host deacetylase SIRT1. Interacts with host capping enzyme RNGTT; this interaction stimulates RNGTT. Binds to host KDR, and to the host integrins ITGAV/ITGB3 and ITGA5/ITGB1. Interacts with host KPNB1/importin beta-1 without previous binding to KPNA1/importin alpha-1. Interacts with EIF2AK2. Interacts with host nucleosome assembly protein NAP1L1; this interaction may be required for the transport of Tat within the nucleus, since the two proteins interact at the nuclear rim. Interacts with host C1QBP/SF2P32; this interaction involves lysine-acetylated Tat. Interacts with the host chemokine receptors CCR2, CCR3 and CXCR4. Interacts with host DPP4/CD26; this interaction may trigger an anti-proliferative effect. Interacts with host LDLR. Interacts with the host extracellular matrix metalloproteinase MMP1. Interacts with host PRMT6; this interaction mediates Tat's methylation. Interacts with, and is ubiquitinated by MDM2/Hdm2. Interacts with host PSMC3 and HTATIP2. Interacts with STAB1; this interaction may overcome SATB1-mediated repression of IL2 and IL2RA (interleukin) in T cells by binding to the same domain than HDAC1. Interacts (when acetylated) with human CDK13, thereby increasing HIV-1 mRNA splicing and promoting the production of the doubly spliced HIV-1 protein Nef. Interacts with host TBP; this interaction modulates the activity of transcriptional pre-initiation complex. Interacts with host RELA. Interacts with host PLSCR1; this interaction negatively regulates Tat transactivation activity by altering its subcellular distribution. Post-translationally, asymmetrical arginine methylation by host PRMT6 seems to diminish the transactivation capacity of Tat and affects the interaction with host CCNT1. In terms of processing, acetylation by EP300, CREBBP, GCN5L2/GCN5 and PCAF regulates the transactivation activity of Tat. EP300-mediated acetylation of Lys-50 promotes dissociation of Tat from the TAR RNA through the competitive binding to PCAF's bromodomain. In addition, the non-acetylated Tat's N-terminus can also interact with PCAF. PCAF-mediated acetylation of Lys-28 enhances Tat's binding to CCNT1. Lys-50 is deacetylated by SIRT1. Polyubiquitination by host MDM2 does not target Tat to degradation, but activates its transactivation function and fosters interaction with CCNT1 and TAR RNA. Post-translationally, phosphorylated by EIF2AK2 on serine and threonine residues adjacent to the basic region important for TAR RNA binding and function. Phosphorylation of Tat by EIF2AK2 is dependent on the prior activation of EIF2AK2 by dsRNA.

The protein localises to the host nucleus. It is found in the host nucleolus. Its subcellular location is the host cytoplasm. It localises to the secreted. Its function is as follows. Transcriptional activator that increases RNA Pol II processivity, thereby increasing the level of full-length viral transcripts. Recognizes a hairpin structure at the 5'-LTR of the nascent viral mRNAs referred to as the transactivation responsive RNA element (TAR) and recruits the cyclin T1-CDK9 complex (P-TEFb complex) that will in turn hyperphosphorylate the RNA polymerase II to allow efficient elongation. The CDK9 component of P-TEFb and other Tat-activated kinases hyperphosphorylate the C-terminus of RNA Pol II that becomes stabilized and much more processive. Other factors such as HTATSF1/Tat-SF1, SUPT5H/SPT5, and HTATIP2 are also important for Tat's function. Besides its effect on RNA Pol II processivity, Tat induces chromatin remodeling of proviral genes by recruiting the histone acetyltransferases (HATs) CREBBP, EP300 and PCAF to the chromatin. This also contributes to the increase in proviral transcription rate, especially when the provirus integrates in transcriptionally silent region of the host genome. To ensure maximal activation of the LTR, Tat mediates nuclear translocation of NF-kappa-B by interacting with host RELA. Through its interaction with host TBP, Tat may also modulate transcription initiation. Tat can reactivate a latently infected cell by penetrating in it and transactivating its LTR promoter. In the cytoplasm, Tat is thought to act as a translational activator of HIV-1 mRNAs. Functionally, extracellular circulating Tat can be endocytosed by surrounding uninfected cells via the binding to several surface receptors such as CD26, CXCR4, heparan sulfate proteoglycans (HSPG) or LDLR. Neurons are rarely infected, but they internalize Tat via their LDLR. Through its interaction with nuclear HATs, Tat is potentially able to control the acetylation-dependent cellular gene expression. Modulates the expression of many cellular genes involved in cell survival, proliferation or in coding for cytokines or cytokine receptors. Tat plays a role in T-cell and neurons apoptosis. Tat induced neurotoxicity and apoptosis probably contribute to neuroAIDS. Circulating Tat also acts as a chemokine-like and/or growth factor-like molecule that binds to specific receptors on the surface of the cells, affecting many cellular pathways. In the vascular system, Tat binds to ITGAV/ITGB3 and ITGA5/ITGB1 integrins dimers at the surface of endothelial cells and competes with bFGF for heparin-binding sites, leading to an excess of soluble bFGF. This Homo sapiens (Human) protein is Protein Tat.